The following is a 354-amino-acid chain: UDP-N-acetylglucosamine--N-acetylmuramyl-(pentapeptide) pyrophosphoryl-undecaprenol N-acetylglucosamine transferase (354 aa).

Residues 13 to 15 (SGG), N125, R161, S189, I242, 261 to 266 (ALTVSE), and Q286 each bind UDP-N-acetyl-alpha-D-glucosamine.

It belongs to the glycosyltransferase 28 family. MurG subfamily.

The protein resides in the cell inner membrane. It carries out the reaction di-trans,octa-cis-undecaprenyl diphospho-N-acetyl-alpha-D-muramoyl-L-alanyl-D-glutamyl-meso-2,6-diaminopimeloyl-D-alanyl-D-alanine + UDP-N-acetyl-alpha-D-glucosamine = di-trans,octa-cis-undecaprenyl diphospho-[N-acetyl-alpha-D-glucosaminyl-(1-&gt;4)]-N-acetyl-alpha-D-muramoyl-L-alanyl-D-glutamyl-meso-2,6-diaminopimeloyl-D-alanyl-D-alanine + UDP + H(+). The protein operates within cell wall biogenesis; peptidoglycan biosynthesis. Functionally, cell wall formation. Catalyzes the transfer of a GlcNAc subunit on undecaprenyl-pyrophosphoryl-MurNAc-pentapeptide (lipid intermediate I) to form undecaprenyl-pyrophosphoryl-MurNAc-(pentapeptide)GlcNAc (lipid intermediate II). The polypeptide is UDP-N-acetylglucosamine--N-acetylmuramyl-(pentapeptide) pyrophosphoryl-undecaprenol N-acetylglucosamine transferase (Buchnera aphidicola subsp. Schizaphis graminum (strain Sg)).